Here is a 127-residue protein sequence, read N- to C-terminus: Glycine cleavage system H protein (127 aa).

The region spanning 22–104 (AVVIGITHFA…YEGAWMVKVE (83 aa)) is the Lipoyl-binding domain. An N6-lipoyllysine modification is found at K63.

This sequence belongs to the GcvH family. The glycine cleavage system is composed of four proteins: P, T, L and H. (R)-lipoate is required as a cofactor.

In terms of biological role, the glycine cleavage system catalyzes the degradation of glycine. The H protein shuttles the methylamine group of glycine from the P protein to the T protein. Is also involved in protein lipoylation via its role as an octanoyl/lipoyl carrier protein intermediate. This Bacillus mycoides (strain KBAB4) (Bacillus weihenstephanensis) protein is Glycine cleavage system H protein.